Reading from the N-terminus, the 358-residue chain is WD repeat domain phosphoinositide-interacting protein 4 (358 aa).

WD repeat units follow at residues 2–40 (AQQRGVNSLQFNQDQSCFCCAMETGVRIYNVEPLMEKGH) and 188–228 (AHQS…KLVE). The short motif at 229 to 232 (LRRG) is the L/FRRG motif element. The stretch at 233 to 272 (TDPATLYCINFSHDSSFLCASSDKGTVHIFALKDTKLNRR) is one WD 3 repeat.

This sequence belongs to the WD repeat PROPPIN family.

Its subcellular location is the preautophagosomal structure. In terms of biological role, component of the autophagy machinery that controls the major intracellular degradation process by which cytoplasmic materials are packaged into autophagosomes and delivered to lysosomes for degradation. Binds phosphatidylinositol 3-phosphate (PtdIns3P). This chain is WD repeat domain phosphoinositide-interacting protein 4 (wdr45), found in Danio rerio (Zebrafish).